We begin with the raw amino-acid sequence, 175 residues long: Sec-independent protein translocase protein TatB (175 aa).

A helical transmembrane segment spans residues 1–21 (MFDIGWSELVLIGVVALIAIG). Disordered stretches follow at residues 100–132 (KPAE…PTPE) and 155–175 (QAPV…AKAS). The segment covering 111–132 (EAPATSSEALTTPTTPEAPTPE) has biased composition (low complexity).

It belongs to the TatB family. The Tat system comprises two distinct complexes: a TatABC complex, containing multiple copies of TatA, TatB and TatC subunits, and a separate TatA complex, containing only TatA subunits. Substrates initially bind to the TatABC complex, which probably triggers association of the separate TatA complex to form the active translocon.

The protein localises to the cell inner membrane. Part of the twin-arginine translocation (Tat) system that transports large folded proteins containing a characteristic twin-arginine motif in their signal peptide across membranes. Together with TatC, TatB is part of a receptor directly interacting with Tat signal peptides. TatB may form an oligomeric binding site that transiently accommodates folded Tat precursor proteins before their translocation. The polypeptide is Sec-independent protein translocase protein TatB (Bradyrhizobium diazoefficiens (strain JCM 10833 / BCRC 13528 / IAM 13628 / NBRC 14792 / USDA 110)).